Reading from the N-terminus, the 180-residue chain is Ribosome rescue factor SmrB (180 aa).

A Smr domain is found at 98-173 (LDLHGLTQLI…GDAALLLLVE (76 aa)).

This sequence belongs to the SmrB family. As to quaternary structure, associates with collided ribosomes, but not with correctly translating polysomes.

Its function is as follows. Acts as a ribosome collision sensor. Detects stalled/collided disomes (pairs of ribosomes where the leading ribosome is stalled and a second ribosome has collided with it) and endonucleolytically cleaves mRNA at the 5' boundary of the stalled ribosome. Stalled/collided disomes form a new interface (primarily via the 30S subunits) that binds SmrB. Cleaved mRNA becomes available for tmRNA ligation, leading to ribosomal subunit dissociation and rescue of stalled ribosomes. This Proteus mirabilis (strain HI4320) protein is Ribosome rescue factor SmrB.